Reading from the N-terminus, the 344-residue chain is uncharacterized protein (344 aa).

An HTH araC/xylS-type domain is found at 242–343 (RGITALVRSK…GVAPSEYSRR (102 aa)). 2 consecutive DNA-binding regions (H-T-H motif) follow at residues 263-284 (TDVAGELDMHPRTLRRRLAEEG) and 310-333 (VQQVSTRLGYTEVSTFSHAFKRWY).

This is an uncharacterized protein from Mycobacterium bovis (strain ATCC BAA-935 / AF2122/97).